The sequence spans 556 residues: Threonylcarbamoyladenosine tRNA methylthiotransferase (556 aa).

A disordered region spans residues 17–57 (SATDPKPHDRQSARKNIVPRARKRNKNNIQEEEPPADSTIP). Positions 60–168 (QKIWIRTWGC…VVEVVEETIK (109 aa)) constitute an MTTase N-terminal domain. [4Fe-4S] cluster contacts are provided by cysteine 69, cysteine 105, cysteine 134, cysteine 210, cysteine 214, and cysteine 217. Positions 196-427 (RKNPLIEIIS…QLFHSYDPYD (232 aa)) constitute a Radical SAM core domain. Residues 427-489 (DHKIGQKQQV…KHFMKGQPVQ (63 aa)) enclose the TRAM domain. A helical membrane pass occupies residues 536 to 556 (VFLFLTALLAAVIAFVGTKLV).

It belongs to the methylthiotransferase family. CDKAL1 subfamily. Requires [4Fe-4S] cluster as cofactor.

It localises to the endoplasmic reticulum membrane. It carries out the reaction N(6)-L-threonylcarbamoyladenosine(37) in tRNA + (sulfur carrier)-SH + AH2 + 2 S-adenosyl-L-methionine = 2-methylsulfanyl-N(6)-L-threonylcarbamoyladenosine(37) in tRNA + (sulfur carrier)-H + 5'-deoxyadenosine + L-methionine + A + S-adenosyl-L-homocysteine + 2 H(+). Its function is as follows. Catalyzes the methylthiolation of N6-threonylcarbamoyladenosine (t(6)A), leading to the formation of 2-methylthio-N6-threonylcarbamoyladenosine (ms(2)t(6)A) at position 37 in tRNAs that read codons beginning with adenine. The chain is Threonylcarbamoyladenosine tRNA methylthiotransferase (cdkal1) from Xenopus laevis (African clawed frog).